The primary structure comprises 103 residues: Large ribosomal subunit protein bL21 (103 aa).

It belongs to the bacterial ribosomal protein bL21 family. As to quaternary structure, part of the 50S ribosomal subunit. Contacts protein L20.

Its function is as follows. This protein binds to 23S rRNA in the presence of protein L20. The sequence is that of Large ribosomal subunit protein bL21 from Pseudomonas aeruginosa (strain LESB58).